The chain runs to 889 residues: Envelope glycoprotein gp160 (889 aa).

A signal peptide spans 1 to 22 (MGCLGNQLLIALLLLSASGIYC). Topologically, residues 23-704 (VQYVTVFYGI…TSWIKYIQYG (682 aa)) are extracellular. An N-linked (GlcNAc...) asparagine; by host glycan is attached at Asn-37. Cys-44 and Cys-57 are disulfide-bonded. N-linked (GlcNAc...) asparagine; by host glycans are attached at residues Asn-70 and Asn-114. Intrachain disulfides connect Cys-101–Cys-226, Cys-108–Cys-217, Cys-113–Cys-175, Cys-239–Cys-269, and Cys-249–Cys-261. The tract at residues 113–174 (CNKSETDRWG…TGLEQEPMVS (62 aa)) is V1. The disordered stretch occupies residues 120 to 145 (RWGLTGTPAPTTTQTTTTQASTTPTS). Low complexity predominate over residues 126–145 (TPAPTTTQTTTTQASTTPTS). N-linked (GlcNAc...) asparagine; by host glycosylation is found at Asn-153, Asn-163, Asn-178, Asn-191, Asn-206, Asn-218, Asn-250, Asn-253, Asn-260, Asn-284, Asn-290, Asn-301, Asn-312, Asn-322, Asn-377, Asn-422, Asn-470, Asn-486, and Asn-489. Positions 175–217 (CKFNMTGLKRDKKREYNETWYSRDLVCEQNSNETDSKCYMNHC) are V2. Positions 317 to 349 (CRRPGNKTVLPVTIMSGLVFHSQPINERPKQAW) are V3. Cysteines 317 and 350 form a disulfide. 2 cysteine pairs are disulfide-bonded: Cys-401-Cys-469 and Cys-408-Cys-442. The tract at residues 408 to 442 (CKMNWFLNWVENIQNGSRWTSQNQKERQRRNYVPC) is V4. The tract at residues 485-492 (GNETNITM) is V5. The interval 536–556 (GVFVLGFLGFLATAGSAMSAA) is fusion peptide. Positions 599-615 (LQTRVTAIEKYLKDQAQ) are immunosuppression. Asn-635, Asn-644, and Asn-660 each carry an N-linked (GlcNAc...) asparagine; by host glycan. Positions 648–675 (QEWEKQVNFLEANITQSLEEAQIQQEKN) form a coiled coil. The segment at 681–702 (KLNSWDIFGNWFDLTSWIKYIQ) is MPER; binding to GalCer. Residues 705-725 (VLIVLGVIGLRIVIYVVQMLA) form a helical membrane-spanning segment. Residues 726 to 889 (RLRQGYRPVF…IRQGLELTLL (164 aa)) lie on the Cytoplasmic side of the membrane. The YXXV motif; contains endocytosis signal motif lies at 731–734 (YRPV). Cys-797 carries the S-palmitoyl cysteine; by host lipid modification. A Di-leucine internalization motif motif is present at residues 888-889 (LL).

In terms of assembly, the mature envelope protein (Env) consists of a homotrimer of non-covalently associated gp120-gp41 heterodimers. The resulting complex protrudes from the virus surface as a spike. Interacts with host CD4 and CCR5. Gp120 also interacts with the C-type lectins CD209/DC-SIGN and CLEC4M/DC-SIGNR (collectively referred to as DC-SIGN(R)). As to quaternary structure, the mature envelope protein (Env) consists of a homotrimer of non-covalently associated gp120-gp41 heterodimers. The resulting complex protrudes from the virus surface as a spike. Post-translationally, specific enzymatic cleavages in vivo yield mature proteins. Envelope glycoproteins are synthesized as an inactive precursor that is heavily N-glycosylated and processed likely by host cell furin in the Golgi to yield the mature SU and TM proteins. The cleavage site between SU and TM requires the minimal sequence [KR]-X-[KR]-R. In terms of processing, palmitoylation of the transmembrane protein and of Env polyprotein (prior to its proteolytic cleavage) is essential for their association with host cell membrane lipid rafts. Palmitoylation is therefore required for envelope trafficking to classical lipid rafts, but not for viral replication.

The protein localises to the virion membrane. It is found in the host cell membrane. The protein resides in the host endosome membrane. The surface protein gp120 (SU) attaches the virus to the host lymphoid cell by binding to the primary receptor CD4. This interaction induces a structural rearrangement creating a high affinity binding site for a chemokine coreceptor like CCR5. This peculiar 2 stage receptor-interaction strategy allows gp120 to maintain the highly conserved coreceptor-binding site in a cryptic conformation, protected from neutralizing antibodies. These changes are transmitted to the transmembrane protein gp41 and are thought to activate its fusogenic potential by unmasking its fusion peptide. Functionally, surface protein gp120 (SU) may target the virus to gut-associated lymphoid tissue (GALT) by binding host ITGA4/ITGB7 (alpha-4/beta-7 integrins), a complex that mediates T-cell migration to the GALT. Interaction between gp120 and ITGA4/ITGB7 would allow the virus to enter GALT early in the infection, infecting and killing most of GALT's resting CD4+ T-cells. This T-cell depletion is believed to be the major insult to the host immune system leading to AIDS. In terms of biological role, the surface protein gp120 is a ligand for CD209/DC-SIGN and CLEC4M/DC-SIGNR, which are respectively found on dendritic cells (DCs), and on endothelial cells of liver sinusoids and lymph node sinuses. These interactions allow capture of viral particles at mucosal surfaces by these cells and subsequent transmission to permissive cells. DCs are professional antigen presenting cells, critical for host immunity by inducing specific immune responses against a broad variety of pathogens. They act as sentinels in various tissues where they take up antigen, process it, and present it to T-cells following migration to lymphoid organs. SIV subverts the migration properties of dendritic cells to gain access to CD4+ T-cells in lymph nodes. Virus transmission to permissive T-cells occurs either in trans (without DCs infection, through viral capture and transmission), or in cis (following DCs productive infection, through the usual CD4-gp120 interaction), thereby inducing a robust infection. In trans infection, bound virions remain infectious over days and it is proposed that they are not degraded, but protected in non-lysosomal acidic organelles within the DCs close to the cell membrane thus contributing to the viral infectious potential during DCs' migration from the periphery to the lymphoid tissues. On arrival at lymphoid tissues, intact virions recycle back to DCs' cell surface allowing virus transmission to CD4+ T-cells. Virion capture also seems to lead to MHC-II-restricted viral antigen presentation, and probably to the activation of SIV-specific CD4+ cells. Its function is as follows. The transmembrane protein gp41 (TM) acts as a class I viral fusion protein. Under the current model, the protein has at least 3 conformational states: pre-fusion native state, pre-hairpin intermediate state, and post-fusion hairpin state. During fusion of viral and target intracellular membranes, the coiled coil regions (heptad repeats) assume a trimer-of-hairpins structure, positioning the fusion peptide in close proximity to the C-terminal region of the ectodomain. The formation of this structure appears to drive apposition and subsequent fusion of viral and target cell membranes. Complete fusion occurs in host cell endosomes. The virus undergoes clathrin-dependent internalization long before endosomal fusion, thus minimizing the surface exposure of conserved viral epitopes during fusion and reducing the efficacy of inhibitors targeting these epitopes. Membranes fusion leads to delivery of the nucleocapsid into the cytoplasm. The envelope glycoprotein gp160 precursor down-modulates cell surface CD4 antigen by interacting with it in the endoplasmic reticulum and blocking its transport to the cell surface. Functionally, the gp120-gp41 heterodimer allows rapid transcytosis of the virus through CD4 negative cells such as simple epithelial monolayers of the intestinal, rectal and endocervical epithelial barriers. Both gp120 and gp41 specifically recognize glycosphingolipids galactosyl-ceramide (GalCer) or 3' sulfo-galactosyl-ceramide (GalS) present in the lipid rafts structures of epithelial cells. Binding to these alternative receptors allows the rapid transcytosis of the virus through the epithelial cells. This transcytotic vesicle-mediated transport of virions from the apical side to the basolateral side of the epithelial cells does not involve infection of the cells themselves. In Simian immunodeficiency virus (isolate PBj14/BCL-3) (SIV-sm), this protein is Envelope glycoprotein gp160 (env).